The primary structure comprises 155 residues: Small ribosomal subunit protein uS7 (155 aa).

This sequence belongs to the universal ribosomal protein uS7 family. In terms of assembly, part of the 30S ribosomal subunit. Contacts proteins S9 and S11.

Functionally, one of the primary rRNA binding proteins, it binds directly to 16S rRNA where it nucleates assembly of the head domain of the 30S subunit. Is located at the subunit interface close to the decoding center, probably blocks exit of the E-site tRNA. The polypeptide is Small ribosomal subunit protein uS7 (Thermosipho africanus (strain TCF52B)).